Reading from the N-terminus, the 29-residue chain is DDCGTLFSGCDTSKDCCEGYVCHLWCKYK.

Intrachain disulfides connect Cys3-Cys17, Cys10-Cys22, and Cys16-Cys26.

Expressed by the venom gland.

It localises to the secreted. Functionally, inhibitor of voltage-gated potassium channels of the Kv4/KCND family. Blocks calcium channels (Cav). This Heteropoda venatoria (Brown huntsman spider) protein is Kappa-sparatoxin-Hv1e.